A 67-amino-acid polypeptide reads, in one-letter code: Ceratotoxin-C (67 aa).

Residues 1 to 23 form the signal peptide; it reads MANIKAVFLICIVAFIAFHCVVA. Residues 24 to 35 constitute a propeptide that is removed on maturation; the sequence is EPTAEDSVVVKR.

As to quaternary structure, homomer of four to six subunits.

It localises to the secreted. Female-specific peptides with potent activity against Gram-positive and Gram-negative bacteria. They have as well hemolytic activity. The polypeptide is Ceratotoxin-C (CTXC1) (Ceratitis capitata (Mediterranean fruit fly)).